The primary structure comprises 339 residues: Dihydroorotate dehydrogenase (quinone) (339 aa).

FMN contacts are provided by residues 62-66 (AGLDK) and Thr86. Lys66 contacts substrate. Residue 111-115 (NRMGF) coordinates substrate. Residues Asn139 and Asn172 each contribute to the FMN site. Asn172 contributes to the substrate binding site. Catalysis depends on Ser175, which acts as the Nucleophile. Residue Asn177 coordinates substrate. Lys217 and Thr245 together coordinate FMN. A substrate-binding site is contributed by 246-247 (NT). Residues Gly268, Gly297, and 318–319 (YS) each bind FMN.

This sequence belongs to the dihydroorotate dehydrogenase family. Type 2 subfamily. As to quaternary structure, monomer. FMN serves as cofactor.

It localises to the cell membrane. The enzyme catalyses (S)-dihydroorotate + a quinone = orotate + a quinol. It participates in pyrimidine metabolism; UMP biosynthesis via de novo pathway; orotate from (S)-dihydroorotate (quinone route): step 1/1. In terms of biological role, catalyzes the conversion of dihydroorotate to orotate with quinone as electron acceptor. This is Dihydroorotate dehydrogenase (quinone) from Shewanella denitrificans (strain OS217 / ATCC BAA-1090 / DSM 15013).